Reading from the N-terminus, the 329-residue chain is Catabolite control protein A (329 aa).

One can recognise an HTH lacI-type domain in the interval 1–57 (MTVTIYDVAREARVSMATVSRVVNGNQNVKPETRDKVNEVIKKLNYRPNAVARGLAS). The H-T-H motif DNA-binding region spans 5-24 (IYDVAREARVSMATVSRVVN).

Its function is as follows. Global transcriptional regulator of carbon catabolite repression (CCR) and carbon catabolite activation (CCA), which ensures optimal energy usage under diverse conditions. This Staphylococcus xylosus protein is Catabolite control protein A (ccpA).